We begin with the raw amino-acid sequence, 139 residues long: D-ribose pyranase (139 aa).

The active-site Proton donor is His20. Substrate contacts are provided by residues Asp28, His106, and 128 to 130; that span reads YAN.

Belongs to the RbsD / FucU family. RbsD subfamily. In terms of assembly, homodecamer.

Its subcellular location is the cytoplasm. The enzyme catalyses beta-D-ribopyranose = beta-D-ribofuranose. The protein operates within carbohydrate metabolism; D-ribose degradation; D-ribose 5-phosphate from beta-D-ribopyranose: step 1/2. Functionally, catalyzes the interconversion of beta-pyran and beta-furan forms of D-ribose. The polypeptide is D-ribose pyranase (Escherichia coli O81 (strain ED1a)).